The following is a 337-amino-acid chain: Mitochondrial glutathione transporter SLC25A40 (337 aa).

Solcar repeat units lie at residues 14–132 (VTPL…LSTF), 140–224 (NETR…LRRW), and 234–328 (STFM…GKGF). A run of 6 helical transmembrane segments spans residues 20–40 (MMAS…LDVV), 104–124 (LWSG…IYFT), 146–166 (IVAG…LELI), 200–221 (WAPT…YENL), 240–260 (FTAG…FDVV), and 299–319 (GLFT…AIMI).

Belongs to the mitochondrial carrier (TC 2.A.29) family. Widely expressed at low level.

It localises to the mitochondrion inner membrane. The enzyme catalyses glutathione(in) = glutathione(out). Probable mitochondrial transporter required for glutathione import into mitochondria. Glutathione, which plays key roles in oxidative metabolism, is produced exclusively in the cytosol and is imported in many organelles. Mitochondrial glutathione is required for the activity and stability of proteins containing iron-sulfur clusters, as well as erythropoiesis. The protein is Mitochondrial glutathione transporter SLC25A40 of Rattus norvegicus (Rat).